A 205-amino-acid chain; its full sequence is Fe/S biogenesis protein NfuA (205 aa).

2 residues coordinate [4Fe-4S] cluster: C162 and C165.

This sequence belongs to the NfuA family. As to quaternary structure, homodimer. [4Fe-4S] cluster serves as cofactor.

In terms of biological role, involved in iron-sulfur cluster biogenesis. Binds a 4Fe-4S cluster, can transfer this cluster to apoproteins, and thereby intervenes in the maturation of Fe/S proteins. Could also act as a scaffold/chaperone for damaged Fe/S proteins. The chain is Fe/S biogenesis protein NfuA from Blochmanniella floridana.